The following is a 656-amino-acid chain: Chaperone protein DnaK (656 aa).

The residue at position 204 (T204) is a Phosphothreonine; by autocatalysis. The disordered stretch occupies residues V607–K656. Low complexity predominate over residues G620–G632. Positions K647 to K656 are enriched in basic and acidic residues.

This sequence belongs to the heat shock protein 70 family.

Acts as a chaperone. This chain is Chaperone protein DnaK, found in Coxiella burnetii (strain CbuK_Q154) (Coxiella burnetii (strain Q154)).